The primary structure comprises 341 residues: UDP-3-O-(3-hydroxymyristoyl)glucosamine N-acyltransferase (341 aa).

His239 functions as the Proton acceptor in the catalytic mechanism.

This sequence belongs to the transferase hexapeptide repeat family. LpxD subfamily. Homotrimer.

It catalyses the reaction a UDP-3-O-[(3R)-3-hydroxyacyl]-alpha-D-glucosamine + a (3R)-hydroxyacyl-[ACP] = a UDP-2-N,3-O-bis[(3R)-3-hydroxyacyl]-alpha-D-glucosamine + holo-[ACP] + H(+). The catalysed reaction is UDP-3-O-[(3R)-3-hydroxytetradecanoyl]-alpha-D-glucosamine + (3R)-hydroxytetradecanoyl-[ACP] = UDP-2-N,3-O-bis[(3R)-3-hydroxytetradecanoyl]-alpha-D-glucosamine + holo-[ACP] + H(+). Its pathway is glycolipid biosynthesis; lipid IV(A) biosynthesis; lipid IV(A) from (3R)-3-hydroxytetradecanoyl-[acyl-carrier-protein] and UDP-N-acetyl-alpha-D-glucosamine: step 3/6. Catalyzes the N-acylation of UDP-3-O-(hydroxytetradecanoyl)glucosamine using 3-hydroxytetradecanoyl-ACP as the acyl donor. Is involved in the biosynthesis of lipid A, a phosphorylated glycolipid that anchors the lipopolysaccharide to the outer membrane of the cell. The protein is UDP-3-O-(3-hydroxymyristoyl)glucosamine N-acyltransferase of Salmonella paratyphi A (strain ATCC 9150 / SARB42).